The chain runs to 593 residues: A-type ATP synthase subunit A (593 aa).

Residue 236 to 243 (GPFGSGKT) coordinates ATP.

Belongs to the ATPase alpha/beta chains family. In terms of assembly, has multiple subunits with at least A(3), B(3), C, D, E, F, H, I and proteolipid K(x).

It is found in the cell membrane. The enzyme catalyses ATP + H2O + 4 H(+)(in) = ADP + phosphate + 5 H(+)(out). In terms of biological role, produces ATP from ADP in the presence of a proton gradient across the membrane. The archaeal alpha chain is a catalytic subunit. Component of the A-type ATP synthase that produces ATP from ADP in the presence of a proton gradient across the membrane. The A chain is the catalytic subunit. This is A-type ATP synthase subunit A from Pyrobaculum aerophilum (strain ATCC 51768 / DSM 7523 / JCM 9630 / CIP 104966 / NBRC 100827 / IM2).